A 61-amino-acid polypeptide reads, in one-letter code: MKTIVLLFVLVLVFALLVKMGMVEAEHGCPDNEDECHEHCKSIGKSGGYCVGPHKQTCRCN.

Positions 1–25 are cleaved as a signal peptide; the sequence is MKTIVLLFVLVLVFALLVKMGMVEA. 3 disulfide bridges follow: cysteine 29/cysteine 50, cysteine 36/cysteine 58, and cysteine 40/cysteine 60.

The protein belongs to the invertebrate defensin family. Type 2 subfamily. As to expression, highly expressed in non-venom gland (hemolymph) and moderately expressed in venom gland.

Its subcellular location is the secreted. In terms of biological role, antibacterial peptide active against Gram-positive bacteria, but not on Gram-negative bacteria. Also has weak blocking activity on Kv1.1/KCNA1, Kv1.2/KCNA2, Kv1.3/KCNA3, KCa3.1/KCNN4/IK, KCa2.3/KCNN3/SK3 and Kv11.1/KCNH2/ERG1 channels (tested at 1 uM). It inhibits potassium channel current by interacting with the pore region. The protein is Defensin BmKDfsin1 of Olivierus martensii (Manchurian scorpion).